The sequence spans 188 residues: MSQAPGAQPSPPTVYHERQRLELCAVHALNNVLQQQLFSQEAADEICKRLAPDSRLNPHRSLLGTGNYDVNVIMAALQGLGLAAVWWDRRRPLSQLALPQVLGLILNLPSPVSLGLLSLPLRRRHWVALRQVDGVYYNLDSKLRAPEALGDEDGVRAFLAAALAQGLCEVLLVVTKEVEEKGSWLRTD.

A Josephin domain is found at P11–D188. Residue C24 is the Nucleophile of the active site. Catalysis depends on H125, which acts as the Proton acceptor.

It is found in the cytoplasm. The protein localises to the cytosol. It catalyses the reaction Thiol-dependent hydrolysis of ester, thioester, amide, peptide and isopeptide bonds formed by the C-terminal Gly of ubiquitin (a 76-residue protein attached to proteins as an intracellular targeting signal).. Its function is as follows. Cleaves 'Lys-63'-linked poly-ubiquitin chains, and with lesser efficiency 'Lys-48'-linked poly-ubiquitin chains (in vitro). May act as a deubiquitinating enzyme. The sequence is that of Josephin-2 (JOSD2) from Homo sapiens (Human).